A 225-amino-acid polypeptide reads, in one-letter code: PKHD-type hydroxylase YbiX (225 aa).

Positions 78–177 (TLSTPLFNRY…RVASFMWIQS (100 aa)) constitute a Fe2OG dioxygenase domain. Residues histidine 96, aspartate 98, and histidine 158 each contribute to the Fe cation site. Residue arginine 168 participates in 2-oxoglutarate binding.

Fe(2+) is required as a cofactor. L-ascorbate serves as cofactor.

The chain is PKHD-type hydroxylase YbiX from Escherichia coli O8 (strain IAI1).